The chain runs to 168 residues: Cilia- and flagella-associated protein HOATZ (168 aa).

Residues 142 to 168 (PKDKVPKSKEVLSESGLRDQEEVKALE) are disordered.

The protein belongs to the HOATZ family. Specifically expressed in tissues with motile cilia and flagella, such as brain ependyma, lung, testis, and oviduct but not in whole brain, liver,kidney, spleen, and eyeball.

The protein localises to the cytoplasm. It is found in the cell projection. The protein resides in the cilium. In terms of biological role, required for motile ciliogenesis and flagellar genesis by mediating the maturation of the glycolytic enzyme ENO4. This Mus musculus (Mouse) protein is Cilia- and flagella-associated protein HOATZ.